The chain runs to 638 residues: Protein disulfide-isomerase A4 (638 aa).

An N-terminal signal peptide occupies residues 1 to 20 (MKLRKAWLLVLLLALTQLLA). Thioredoxin domains are found at residues 21-162 (AASA…EVSQ) and 162-294 (QPDW…EFLK). A disordered region spans residues 24–50 (AGDAHEDTSDTENATEEEEEEDDDDLE). The segment covering 32 to 50 (SDTENATEEEEEEDDDDLE) has biased composition (acidic residues). Asparagine 36 carries an N-linked (GlcNAc...) asparagine glycan. Residues 84 to 87 (CGHC) carry the CXXC motif. 2 disulfide bridges follow: cysteine 84–cysteine 87 and cysteine 199–cysteine 202. Lysine 359 carries the post-translational modification N6-acetyllysine. The region spanning 498–629 (FKKGKLKPVI…LSKFIDEHAT (132 aa)) is the Thioredoxin 3 domain. Positions 548-551 (CGHC) match the CXXC motif. Residues cysteine 548 and cysteine 551 are joined by a disulfide bond. The short motif at 635 to 638 (KEEL) is the Prevents secretion from ER element.

The protein belongs to the protein disulfide isomerase family. Part of a large chaperone multiprotein complex comprising DNAJB11, HSP90B1, HSPA5, HYOU, PDIA2, PDIA4, PDIA6, PPIB, SDF2L1, UGGT1 and very small amounts of ERP29, but not, or at very low levels, CALR nor CANX. Component of a complex containing at least CRELD2, MANF, MATN3 and PDIA4.

It localises to the endoplasmic reticulum lumen. The protein localises to the melanosome. It catalyses the reaction Catalyzes the rearrangement of -S-S- bonds in proteins.. The polypeptide is Protein disulfide-isomerase A4 (Pdia4) (Mus musculus (Mouse)).